An 89-amino-acid polypeptide reads, in one-letter code: MKAFPTFALLFLVLLFSAHVSDAQHWSYGLRPGGKRDTESLQDMYHETPNEVALFPELERLECSVPQSRLNVLRGALMNWLEGENRKKI.

Residues 1–23 (MKAFPTFALLFLVLLFSAHVSDA) form the signal peptide. Position 24 is a pyrrolidone carboxylic acid (Gln24). Gly33 carries the post-translational modification Glycine amide.

Belongs to the GnRH family. As to expression, expressed in the forebrain from larval stages.

The protein localises to the secreted. Its function is as follows. Stimulates the secretion of gonadotropins. The protein is Progonadoliberin-1 (gnrh1) of Xenopus laevis (African clawed frog).